Here is a 601-residue protein sequence, read N- to C-terminus: Elongation factor 4 (601 aa).

In terms of domain architecture, tr-type G spans 6 to 188 (SHIRNFSIIA…QIVHRVPAPE (183 aa)). GTP contacts are provided by residues 18–23 (DHGKST) and 135–138 (NKID).

Belongs to the TRAFAC class translation factor GTPase superfamily. Classic translation factor GTPase family. LepA subfamily.

It localises to the cell inner membrane. The enzyme catalyses GTP + H2O = GDP + phosphate + H(+). In terms of biological role, required for accurate and efficient protein synthesis under certain stress conditions. May act as a fidelity factor of the translation reaction, by catalyzing a one-codon backward translocation of tRNAs on improperly translocated ribosomes. Back-translocation proceeds from a post-translocation (POST) complex to a pre-translocation (PRE) complex, thus giving elongation factor G a second chance to translocate the tRNAs correctly. Binds to ribosomes in a GTP-dependent manner. This Anaeromyxobacter sp. (strain K) protein is Elongation factor 4.